The primary structure comprises 869 residues: Valine--tRNA ligase (869 aa).

Positions 47–57 (PYPTGNFHIGN) match the 'HIGH' region motif. The 'KMSKS' region motif lies at 521-525 (KMSKS). Lys524 contributes to the ATP binding site.

Belongs to the class-I aminoacyl-tRNA synthetase family. ValS type 2 subfamily.

It localises to the cytoplasm. It carries out the reaction tRNA(Val) + L-valine + ATP = L-valyl-tRNA(Val) + AMP + diphosphate. In terms of biological role, catalyzes the attachment of valine to tRNA(Val). As ValRS can inadvertently accommodate and process structurally similar amino acids such as threonine, to avoid such errors, it has a 'posttransfer' editing activity that hydrolyzes mischarged Thr-tRNA(Val) in a tRNA-dependent manner. The sequence is that of Valine--tRNA ligase from Methanosarcina mazei (strain ATCC BAA-159 / DSM 3647 / Goe1 / Go1 / JCM 11833 / OCM 88) (Methanosarcina frisia).